A 260-amino-acid chain; its full sequence is Large ribosomal subunit protein uL2 (260 aa).

The segment at 1–24 is disordered; it reads MGRVIRAQRKGAGSVFKSHTHHRK.

It belongs to the universal ribosomal protein uL2 family.

It localises to the cytoplasm. This Solanum lycopersicum (Tomato) protein is Large ribosomal subunit protein uL2 (RPL8).